We begin with the raw amino-acid sequence, 25 residues long: Putative cytochrome c4 (25 aa).

A disordered region spans residues 1–25 (QEDIEAGKQKSATCTACHGQEGNST). Heme is bound by residues cysteine 14 and cysteine 17.

Binds 2 heme groups per subunit.

The protein resides in the periplasm. Diheme, high potential cytochrome c believed to be an intermediate electron donor to terminal oxidation systems. In Aliivibrio fischeri (Vibrio fischeri), this protein is Putative cytochrome c4.